Consider the following 408-residue polypeptide: Potassium channel subfamily K member 13 (408 aa).

Topologically, residues 1 to 19 are cytoplasmic; the sequence is MAGRGFSWGPGHLNEDNAR. The helical transmembrane segment at 20-40 threads the bilayer; it reads FLLLAALIVLYLLGGAAVFSA. N-linked (GlcNAc...) asparagine glycans are attached at residues N59 and N65. An intramembrane region (pore-forming) is located at residues 95-115; sequence WDFTGAFYFVGTVVSTIGFGM. K(+)-binding residues include T110, I111, and G112. The tract at residues 110–115 is selectivity filter 1; it reads TIGFGM. A helical transmembrane segment spans residues 125 to 145; it reads IFLIFYGLVGCSSTILFFNLF. The Cytoplasmic portion of the chain corresponds to 146-193; that stretch reads LERLITIIAYIMKSCHQRQLRRRGALPQESLKDAGQCEVDSLAGWKPS. A helical transmembrane segment spans residues 194–214; that stretch reads VYYVMLILCTASILISCCASA. Residues 224 to 244 constitute an intramembrane region (pore-forming); that stretch reads YFDSLYFCFVAFSTIGFGDLV. K(+) contacts are provided by T237, I238, G239, and F240. Positions 237-242 are selectivity filter 2; that stretch reads TIGFGD. Residues 263 to 283 traverse the membrane as a helical segment; sequence VFILMGVCCIYSLFNVISILI. At 284–408 the chain is on the cytoplasmic side; it reads KQSLNWILRK…NRLAETSGDR (125 aa).

Belongs to the two pore domain potassium channel (TC 1.A.1.8) family. In terms of assembly, homodimer. Heterodimer with KCNK12. In terms of tissue distribution, expressed in microglia (at protein level).

The protein resides in the cell membrane. It carries out the reaction K(+)(in) = K(+)(out). The channel conductance is activated by arachidonic acid and inhibited by Ba(2+) ions, volatile anesthetics such as halothane and antiarrhythmic drugs mexiletine and lidocaine. Insensitive to extracellular pH change. In terms of biological role, k(+) channel that conducts outward rectifying tonic currents potentiated by purinergic signals. Homo- and heterodimerizes to form functional channels with distinct regulatory and gating properties. Contributes most of K(+) currents at the plasma membrane of resting microglia. Maintains a depolarized membrane potential required for proper ramified microglia morphology and phagocytosis, selectively mediating microglial pruning of presynaptic compartments at hippocampal excitatory synapses. Upon local release of ATP caused by neuronal injury or infection, it is potentiated by P2RY12 and P2RX7 receptor signaling and contributes to ATP-triggered K(+) efflux underlying microglial NLRP3 inflammasome assembly and IL1B release. The protein is Potassium channel subfamily K member 13 of Homo sapiens (Human).